A 490-amino-acid polypeptide reads, in one-letter code: MDPILVLVLTLSCLFLLSLWRQSYERGKLPPGPTPLPIIGNILQIDVKDICQSFTNLSRVYGPVYTLYLGRKPTVVLHGYEAVKEALVDHGDVFAGRGRLPVFDKATNGMGIGFSNGSVWKNTRHFSLMTLRNLGMGKRSIEDRVQEEARCLVEELRKTNGSPCDPTFILGCAPCNVICSIIFQDRFDYKDRDFLNLLEKLDEISKILSTPWLQVCNTFPALLDYCPGSHNQFFKNYAYIKNFLLEKIREHKESLDVTIPRDFIDYFLIKGAQEDDNHPLKNNFEHLAITVTDLFIGGTESMSTTLRYALLLLLKYPHVTAKVQEEIEHVIGKHRRPCMQDRSHMPYTNAMIHEVQRFIDLVPNNLPHEVTCDIKFRNYFIPKGTTVITSLSSVLRDSKEFPNPEKFDPGHFLDENGKFKKSDYFMPFSTGKRICAGEGLARMELFLFLTSILQNFNLKPLVHPKDIDITPMLIGLGSVPPAFQLCFIPS.

The residue at position 127 (Ser127) is a Phosphoserine. N6-acetyllysine is present on residues Lys252 and Lys375. Heme is bound at residue Cys435.

This sequence belongs to the cytochrome P450 family. Heme serves as cofactor. As to expression, expressed in liver.

The protein resides in the endoplasmic reticulum membrane. It is found in the microsome membrane. The catalysed reaction is an organic molecule + reduced [NADPH--hemoprotein reductase] + O2 = an alcohol + oxidized [NADPH--hemoprotein reductase] + H2O + H(+). Its function is as follows. Metabolizes arachidonic acid mainly to 12-hydroxyeicosatetraenoic acid (HETE). In Mus musculus (Mouse), this protein is Cytochrome P450 2C54.